The chain runs to 126 residues: Small ribosomal subunit protein uS13 (126 aa).

The segment at 99-126 (LRGQSTKNNARTRKGKRKTVANKKRVTK) is disordered. The segment covering 108–126 (ARTRKGKRKTVANKKRVTK) has biased composition (basic residues).

This sequence belongs to the universal ribosomal protein uS13 family. In terms of assembly, part of the 30S ribosomal subunit. Forms a loose heterodimer with protein S19. Forms two bridges to the 50S subunit in the 70S ribosome.

Its function is as follows. Located at the top of the head of the 30S subunit, it contacts several helices of the 16S rRNA. In the 70S ribosome it contacts the 23S rRNA (bridge B1a) and protein L5 of the 50S subunit (bridge B1b), connecting the 2 subunits; these bridges are implicated in subunit movement. Contacts the tRNAs in the A and P-sites. The polypeptide is Small ribosomal subunit protein uS13 (Azobacteroides pseudotrichonymphae genomovar. CFP2).